Reading from the N-terminus, the 69-residue chain is Sec-independent protein translocase protein TatA (69 aa).

Residues 1–21 (MFGLGGQELILILLIILLLFG) traverse the membrane as a helical segment.

This sequence belongs to the TatA/E family. Forms a complex with TatC.

The protein localises to the cell inner membrane. Its function is as follows. Part of the twin-arginine translocation (Tat) system that transports large folded proteins containing a characteristic twin-arginine motif in their signal peptide across membranes. TatA could form the protein-conducting channel of the Tat system. The chain is Sec-independent protein translocase protein TatA from Pelodictyon phaeoclathratiforme (strain DSM 5477 / BU-1).